A 592-amino-acid polypeptide reads, in one-letter code: Condensin-2 complex subunit H2 (592 aa).

2 disordered regions span residues 89 to 116 (NKKRDKQGSSSDGNQEQAPSGSEGDGCE) and 261 to 285 (EAPSEGRMLRPRPAVQPVSEEPKQL). Residues 96 to 108 (GSSSDGNQEQAPS) show a composition bias toward polar residues.

The protein belongs to the CND2 H2 (condensin-2 subunit 2) family. In terms of assembly, component of the condensin-2 complex, which contains the smc2 and smc4 heterodimer, and three non SMC subunits, ncapg2, ncaph2 and ncapd3 that probably regulate the complex.

It localises to the nucleus. Regulatory subunit of the condensin-2 complex, a complex that seems to provide chromosomes with an additional level of organization and rigidity and in establishing mitotic chromosome architecture. This chain is Condensin-2 complex subunit H2 (ncaph2), found in Danio rerio (Zebrafish).